A 611-amino-acid polypeptide reads, in one-letter code: BTB/POZ domain-containing protein 9 (611 aa).

In terms of domain architecture, BTB spans 36–104; it reads GDVTFVVEKK…IYTGRATLTD (69 aa). A BACK domain is found at 142-240; that stretch reads VCMTFDVASL…SLTELLNVVR (99 aa). Positions 560 to 611 are disordered; that stretch reads QSAQKDSSDEPGTGGASAAGQQLDPHALQAPSGSSLPSSPGSNSRSPNRQHQ. Over residues 586–611 the composition is skewed to low complexity; that stretch reads ALQAPSGSSLPSSPGSNSRSPNRQHQ.

The protein is BTB/POZ domain-containing protein 9 (BTBD9) of Bos taurus (Bovine).